The chain runs to 125 residues: Large ribosomal subunit protein bL19 (125 aa).

Belongs to the bacterial ribosomal protein bL19 family.

Its function is as follows. This protein is located at the 30S-50S ribosomal subunit interface and may play a role in the structure and function of the aminoacyl-tRNA binding site. This chain is Large ribosomal subunit protein bL19, found in Synechococcus sp. (strain JA-2-3B'a(2-13)) (Cyanobacteria bacterium Yellowstone B-Prime).